A 108-amino-acid polypeptide reads, in one-letter code: Abdominal ganglion neuropeptide R3-14 (108 aa).

Residues 1 to 23 form the signal peptide; the sequence is MQVLHLCLAVSIAVALLSQAAWS. Pyrrolidone carboxylic acid (Glu); partial occurs at positions 24 and 52. Residue Q66 is modified to Pyrrolidone carboxylic acid.

In terms of processing, the partial formation of pyroglutamate from N-terminal glutamic acid in peptides isolated from single cells is detected by mass spectrometry. There are indications this modification depends on a heat sensitive factor. Neurons R3-R14. A cluster of 12 giant neurons located on the right side of the abdominal ganglion.

The protein localises to the secreted. Functionally, HRBP is a myoactive peptide that excites Aplysia heart and enhances gut motility in vitro. The chain is Abdominal ganglion neuropeptide R3-14 from Aplysia californica (California sea hare).